Here is a 487-residue protein sequence, read N- to C-terminus: Cysteine--tRNA ligase (487 aa).

Residue Cys-29 coordinates Zn(2+). The 'HIGH' region motif lies at 31–41; sequence VTVYDVNHVGH. The Zn(2+) site is built by Cys-209, His-234, and Glu-238. Positions 266–270 match the 'KMSKS' region motif; it reads KMSKS. ATP is bound at residue Lys-269.

This sequence belongs to the class-I aminoacyl-tRNA synthetase family. As to quaternary structure, monomer. Zn(2+) serves as cofactor.

The protein localises to the cytoplasm. It carries out the reaction tRNA(Cys) + L-cysteine + ATP = L-cysteinyl-tRNA(Cys) + AMP + diphosphate. The chain is Cysteine--tRNA ligase from Persephonella marina (strain DSM 14350 / EX-H1).